We begin with the raw amino-acid sequence, 95 residues long: Aspartyl/glutamyl-tRNA(Asn/Gln) amidotransferase subunit C (95 aa).

This sequence belongs to the GatC family. Heterotrimer of A, B and C subunits.

It catalyses the reaction L-glutamyl-tRNA(Gln) + L-glutamine + ATP + H2O = L-glutaminyl-tRNA(Gln) + L-glutamate + ADP + phosphate + H(+). The enzyme catalyses L-aspartyl-tRNA(Asn) + L-glutamine + ATP + H2O = L-asparaginyl-tRNA(Asn) + L-glutamate + ADP + phosphate + 2 H(+). In terms of biological role, allows the formation of correctly charged Asn-tRNA(Asn) or Gln-tRNA(Gln) through the transamidation of misacylated Asp-tRNA(Asn) or Glu-tRNA(Gln) in organisms which lack either or both of asparaginyl-tRNA or glutaminyl-tRNA synthetases. The reaction takes place in the presence of glutamine and ATP through an activated phospho-Asp-tRNA(Asn) or phospho-Glu-tRNA(Gln). The chain is Aspartyl/glutamyl-tRNA(Asn/Gln) amidotransferase subunit C from Clostridium botulinum (strain ATCC 19397 / Type A).